The sequence spans 639 residues: DNA primase (639 aa).

The CHC2-type zinc finger occupies 41–65; that stretch reads CPFHNEKSPSFHVRPNHGHFHCFGC. The Toprim domain maps to 262-348; it reads HQAVVVEGYT…AGQSFVAVAP (87 aa). 3 residues coordinate Mg(2+): Glu-268, Asp-319, and Asp-321. The disordered stretch occupies residues 460–479; sequence RAAQRPTAGPPTELAVRPDP.

Belongs to the DnaG primase family. In terms of assembly, monomer. Interacts with DnaB. It depends on Zn(2+) as a cofactor. Requires Mg(2+) as cofactor.

It catalyses the reaction ssDNA + n NTP = ssDNA/pppN(pN)n-1 hybrid + (n-1) diphosphate.. Functionally, RNA polymerase that catalyzes the synthesis of short RNA molecules used as primers for DNA polymerase during DNA replication. The polypeptide is DNA primase (Mycobacterium bovis (strain ATCC BAA-935 / AF2122/97)).